Consider the following 234-residue polypeptide: 1-(5-phosphoribosyl)-5-[(5-phosphoribosylamino)methylideneamino] imidazole-4-carboxamide isomerase (234 aa).

Aspartate 9 (proton acceptor) is an active-site residue. Catalysis depends on aspartate 131, which acts as the Proton donor.

The protein belongs to the HisA/HisF family.

It localises to the cytoplasm. It carries out the reaction 1-(5-phospho-beta-D-ribosyl)-5-[(5-phospho-beta-D-ribosylamino)methylideneamino]imidazole-4-carboxamide = 5-[(5-phospho-1-deoxy-D-ribulos-1-ylimino)methylamino]-1-(5-phospho-beta-D-ribosyl)imidazole-4-carboxamide. It participates in amino-acid biosynthesis; L-histidine biosynthesis; L-histidine from 5-phospho-alpha-D-ribose 1-diphosphate: step 4/9. In Staphylococcus aureus (strain NCTC 8325 / PS 47), this protein is 1-(5-phosphoribosyl)-5-[(5-phosphoribosylamino)methylideneamino] imidazole-4-carboxamide isomerase.